Here is a 487-residue protein sequence, read N- to C-terminus: DNA ligase (487 aa).

Catalysis depends on Lys159, which acts as the N6-AMP-lysine intermediate. ATP-binding residues include Arg164, Arg182, and Glu217. Glu217 provides a ligand contact to a divalent metal cation. An interaction with the sliding clamp region spans residues 229–237; sequence EGLDFLFDA. Glu344 provides a ligand contact to a divalent metal cation. ATP contacts are provided by Arg359 and Lys365.

The protein belongs to the ATP-dependent DNA ligase family. Interacts with the sliding clamp. A divalent metal cation serves as cofactor.

It catalyses the reaction ATP + (deoxyribonucleotide)n-3'-hydroxyl + 5'-phospho-(deoxyribonucleotide)m = (deoxyribonucleotide)n+m + AMP + diphosphate.. Functionally, DNA ligase, which is expressed in the early stage of lytic development, has been implicated in T4 DNA synthesis and genetic recombination. It may also play a role in T4 DNA repair. The sequence is that of DNA ligase (30) from Enterobacteria phage T4 (Bacteriophage T4).